The following is a 404-amino-acid chain: Pre-heme d1 synthase (404 aa).

Residues 22-235 enclose the Radical SAM core domain; the sequence is GTPKPVVIWN…LIARALESAE (214 aa). Residues Cys-36, Cys-40, Cys-43, Cys-340, Cys-343, Cys-349, and Cys-371 each contribute to the [4Fe-4S] cluster site.

Belongs to the radical SAM superfamily. [4Fe-4S] cluster is required as a cofactor.

Its pathway is porphyrin-containing compound metabolism. Its function is as follows. Involved in heme d1 biosynthesis. Radical SAM enzyme that catalyzes the removal of two propionate side chains from the intermediate 12,18-didecarboxysiroheme (DDSH) and may introduce the keto functions on rings A and B, yielding the heme d1 precursor dihydro-heme d1. This Dinoroseobacter shibae (strain DSM 16493 / NCIMB 14021 / DFL 12) protein is Pre-heme d1 synthase.